The sequence spans 3718 residues: Laminin subunit alpha-5 (3718 aa).

An N-terminal signal peptide occupies residues 1–40 (MAKRGGQLCAGSAPGALGPRSPAPRPLLLLLAGLALVGEA). One can recognise a Laminin N-terminal domain in the interval 46–304 (DGFSLHPPYF…SIKDISIGGR (259 aa)). Residues Asn-100, Asn-148, and Asn-248 are each glycosylated (N-linked (GlcNAc...) asparagine). Cystine bridges form between Cys-305/Cys-314, Cys-307/Cys-327, Cys-329/Cys-338, Cys-341/Cys-361, Cys-364/Cys-373, Cys-366/Cys-398, Cys-401/Cys-410, Cys-413/Cys-431, Cys-434/Cys-445, Cys-436/Cys-452, Cys-454/Cys-463, and Cys-466/Cys-476. Laminin EGF-like domains follow at residues 305–363 (CVCH…ECQS), 364–433 (CNCH…VCRP), and 434–479 (CDCE…CYPL). Asn-383 is a glycosylation site (N-linked (GlcNAc...) asparagine). Asn-457 is a glycosylation site (N-linked (GlcNAc...) asparagine). An N-linked (GlcNAc...) asparagine glycan is attached at Asn-485. Disulfide bonds link Cys-500/Cys-512, Cys-502/Cys-521, Cys-523/Cys-532, Cys-535/Cys-544, Cys-547/Cys-559, Cys-549/Cys-566, Cys-568/Cys-577, Cys-580/Cys-590, Cys-593/Cys-605, Cys-595/Cys-611, Cys-613/Cys-622, Cys-625/Cys-635, Cys-638/Cys-650, Cys-640/Cys-656, Cys-658/Cys-667, Cys-670/Cys-680, Cys-683/Cys-695, Cys-685/Cys-702, Cys-704/Cys-713, Cys-716/Cys-731, Cys-752/Cys-761, Cys-764/Cys-779, Cys-782/Cys-796, Cys-784/Cys-802, Cys-804/Cys-813, Cys-816/Cys-831, Cys-834/Cys-846, Cys-836/Cys-853, and Cys-855/Cys-864. 7 consecutive Laminin EGF-like domains span residues 500 to 546 (CDCN…SCHP), 547 to 592 (CQCS…LCQL), 593 to 637 (CGCS…DCHA), 638 to 682 (CACD…SCIP), 683 to 728 (CHCS…YCEA), 729 to 781 (GSCH…GCTR), and 782 to 833 (CSCD…GCRS). One can recognise a Laminin EGF-like 11; truncated domain in the interval 834-855 (CRCDVGGALGQGCEPKTGACRC). The segment at 856–1442 (RPNTQGPTCS…SLFYNNGALP (587 aa)) is domain IV 1 (domain IV B). Asn-905, Asn-926, and Asn-964 each carry an N-linked (GlcNAc...) asparagine glycan. The segment at 1253–1284 (LTQSQELSPGAPPEGPQPRPPTAVDPNAEPTL) is disordered. Over residues 1262 to 1275 (GAPPEGPQPRPPTA) the composition is skewed to pro residues. A glycan (N-linked (GlcNAc...) asparagine) is linked at Asn-1335. Intrachain disulfides connect Cys-1443/Cys-1455, Cys-1445/Cys-1462, Cys-1464/Cys-1473, Cys-1476/Cys-1486, Cys-1489/Cys-1496, Cys-1491/Cys-1503, Cys-1505/Cys-1514, Cys-1517/Cys-1530, Cys-1533/Cys-1548, Cys-1535/Cys-1555, Cys-1557/Cys-1566, Cys-1569/Cys-1579, Cys-1582/Cys-1594, Cys-1584/Cys-1601, Cys-1603/Cys-1612, and Cys-1615/Cys-1630. 4 Laminin EGF-like domains span residues 1443 to 1488 (CGCH…NCRP), 1489 to 1532 (CDCG…GCEE), 1533 to 1581 (CNCS…SCRP), and 1582 to 1632 (CDCH…GCTR). Asn-1534 carries an N-linked (GlcNAc...) asparagine glycan. A Laminin EGF-like 16; first part domain is found at 1633–1642 (CFCFGATERC). The region spanning 1646-1831 (NLARHEFVDM…RGPPASNVEL (186 aa)) is the Laminin IV type A domain. 2 consecutive short sequence motifs (cell attachment site) follow at residues 1723–1725 (RGD) and 1839–1841 (RGD). Residues 1832–1864 (CMCPANYRGDSCQECAPGYYRDTKGLFLGRCVP) form the Laminin EGF-like 16; second part domain. 24 disulfides stabilise this stretch: Cys-1865–Cys-1874, Cys-1867–Cys-1881, Cys-1884–Cys-1893, Cys-1896–Cys-1912, Cys-1915–Cys-1930, Cys-1917–Cys-1939, Cys-1941–Cys-1950, Cys-1953–Cys-1968, Cys-1971–Cys-1986, Cys-1973–Cys-1993, Cys-1996–Cys-2005, Cys-2008–Cys-2022, Cys-2025–Cys-2035, Cys-2027–Cys-2042, Cys-2044–Cys-2053, Cys-2056–Cys-2069, Cys-2072–Cys-2083, Cys-2074–Cys-2090, Cys-2092–Cys-2101, Cys-2104–Cys-2116, Cys-2119–Cys-2126, Cys-2121–Cys-2133, Cys-2135–Cys-2144, and Cys-2147–Cys-2166. 6 consecutive Laminin EGF-like domains span residues 1865–1914 (CQCH…PCVS), 1915–1970 (CPCP…SCQP), 1971–2024 (CDCS…NCTR), 2025–2071 (CDCS…GCRP), 2072–2118 (CACG…GCRR), and 2119–2168 (CQCP…HCEV). An N-linked (GlcNAc...) asparagine glycan is attached at Asn-2021. The tract at residues 2169–2735 (CDHCVVLLLD…AQARSAASKV (567 aa)) is domain II and I. Residues Asn-2198, Asn-2211, Asn-2365, Asn-2395, Asn-2425, Asn-2503, and Asn-2570 are each glycosylated (N-linked (GlcNAc...) asparagine). Coiled coils occupy residues 2205–2257 (ARLH…SQAT) and 2330–2464 (TRDL…ASLD). 2 coiled-coil regions span residues 2604–2621 (ARKN…AMLA) and 2639–2705 (AEAL…LENR). The N-linked (GlcNAc...) asparagine glycan is linked to Asn-2709. 5 Laminin G-like domains span residues 2736–2933 (KVSM…DKPC), 2947–3119 (GSYL…SFGC), 3128–3296 (TMTF…SVGC), 3337–3511 (AYQF…VTPC), and 3518–3689 (DGLF…MRGC). 2 disulfide bridges follow: Cys-2903/Cys-2933 and Cys-3094/Cys-3119. 4 N-linked (GlcNAc...) asparagine glycosylation sites follow: Asn-3111, Asn-3213, Asn-3261, and Asn-3291. Intrachain disulfides connect Cys-3265/Cys-3296 and Cys-3488/Cys-3511. Residues Asn-3623 and Asn-3673 are each glycosylated (N-linked (GlcNAc...) asparagine). Cysteines 3661 and 3689 form a disulfide.

In terms of assembly, laminin is a complex glycoprotein, consisting of three different polypeptide chains (alpha, beta, gamma), which are bound to each other by disulfide bonds into a cross-shaped molecule comprising one long and three short arms with globules at each end. Alpha-5 is a subunit of laminin-10 (laminin-511), laminin-11 (laminin-521) and laminin-15 (laminin-523). As to expression, in adult, high levels in heart, lung, and kidney; lower in brain, muscle and testis; very low in liver, gut and skin.

The protein resides in the secreted. Its subcellular location is the extracellular space. It localises to the extracellular matrix. It is found in the basement membrane. Its function is as follows. Binding to cells via a high affinity receptor, laminin is thought to mediate the attachment, migration and organization of cells into tissues during embryonic development by interacting with other extracellular matrix components. Alpha-5 may be the major laminin alpha chain of adult epithelial and/or endothelial basal laminae. Plays a role in the regulation of skeletogenesis, through a mechanism that involves integrin-mediated signaling and PTK2B/PYK2. In Mus musculus (Mouse), this protein is Laminin subunit alpha-5 (Lama5).